The chain runs to 432 residues: Enolase 1 (432 aa).

Gln-163 contacts (2R)-2-phosphoglycerate. Catalysis depends on Glu-205, which acts as the Proton donor. Residues Asp-242, Glu-287, and Asp-314 each contribute to the Mg(2+) site. 4 residues coordinate (2R)-2-phosphoglycerate: Lys-339, Arg-368, Ser-369, and Lys-390. Lys-339 (proton acceptor) is an active-site residue.

It belongs to the enolase family. Mg(2+) is required as a cofactor.

It localises to the cytoplasm. It is found in the secreted. The protein localises to the cell surface. It catalyses the reaction (2R)-2-phosphoglycerate = phosphoenolpyruvate + H2O. The protein operates within carbohydrate degradation; glycolysis; pyruvate from D-glyceraldehyde 3-phosphate: step 4/5. In terms of biological role, catalyzes the reversible conversion of 2-phosphoglycerate (2-PG) into phosphoenolpyruvate (PEP). It is essential for the degradation of carbohydrates via glycolysis. This chain is Enolase 1, found in Lactobacillus johnsonii (strain CNCM I-12250 / La1 / NCC 533).